Here is a 253-residue protein sequence, read N- to C-terminus: Tabinhibitin 3 (253 aa).

An N-terminal signal peptide occupies residues 1 to 22; that stretch reads MTLKRIFCAALALIVLQSVASA. In terms of domain architecture, SCP spans 66–209; it reads LQKTNWLRGV…LKRALFTCNF (144 aa). Positions 222–224 match the Cell attachment site motif; the sequence is RGD.

The protein belongs to the CRISP family. Expressed in salivary glands.

It localises to the secreted. Functionally, inhibits platelet aggregation induced by all agonists tested (ADP, arachidonic acid, the thromboxane A2 analog U46619, thrombin, and snake venom snaclecs (TMVA that activates platelet through GPIB, and stejnulxin that specifically acts through GPVI (GP6))). May act by competing with fibrinogen for binding to glycoprotein IIb/IIIa (ITGA2B/ITGB3). The polypeptide is Tabinhibitin 3 (Tabanus yao (Horsefly)).